The primary structure comprises 71 residues: Small ribosomal subunit protein bS21 (71 aa).

The span at 48–59 shows a compositional bias: basic residues; the sequence is KAAAAVKRHAKK. The interval 48-71 is disordered; the sequence is KAAAAVKRHAKKVQREQRRRERLY. Positions 60-71 are enriched in basic and acidic residues; the sequence is VQREQRRRERLY.

It belongs to the bacterial ribosomal protein bS21 family.

This chain is Small ribosomal subunit protein bS21, found in Azotobacter vinelandii (strain DJ / ATCC BAA-1303).